Here is an 85-residue protein sequence, read N- to C-terminus: uncharacterized protein (85 aa).

Belongs to the BolA/IbaG family.

This is an uncharacterized protein from Haemophilus influenzae (strain ATCC 51907 / DSM 11121 / KW20 / Rd).